We begin with the raw amino-acid sequence, 299 residues long: CRISPR system Cms protein Csm4 (299 aa).

The protein belongs to the CRISPR-associated Csm4 family. Part of the Csm effector complex that includes at least Cas10(1), Csm2(3), Csm3(5), Csm4(1), Csm5(1) and mature crRNA. The Csm complex is elongated and slightly twisted with a maximal length of 215 Angstroms and a diameter of 75-80 Angstroms. It has been modeled to have a central protein filamant of Csm3 subunits along which the dsRNA helix of paired crRNA and target RNA binds. The filament is capped at one end by Cas10 and Csm4 and at the other end by Csm5; ssDNA is thought to bind to the N-terminal HD domain of Cas10. Csm with a precursor crRNA does not include Csm5, while Cas6, the enzyme probably involved in pre-crRNA processing, is found associated with a subset of the Csm complex.

Its function is as follows. CRISPR (clustered regularly interspaced short palindromic repeat) is an adaptive immune system that provides protection against mobile genetic elements (viruses, transposable elements and conjugative plasmids). CRISPR clusters contain spacers, sequences complementary to antecedent mobile elements, and target invading nucleic acids. CRISPR clusters are transcribed and processed into CRISPR RNA (crRNA). The type III-A Csm effector complex binds crRNA and acts as a crRNA-guided RNase, DNase and cyclic oligoadenylate synthase; binding of target RNA cognate to the crRNA is required for all activities. In a heterologous host this Csm effector complex restricts ssRNA phage MS2, suggesting it may target RNA viruses in vivo. Functionally, csm functions as a non-specific ssDNase. Base-pairing between crRNA and target RNA to form a ternary Csm complex activates a ssDNase activity; target RNA cleavage suppresses the ssDNase, a temporal control that prevents uncontrolled DNA degradation. Viral RNA transcripts probably tether the Csm complex to the viral genome, recruiting Cas10 ssDNA activity which is able to degrade DNA in the transcription bubble, spatially controlling the DNase activity. In terms of biological role, the subunit probably binds to the 5' handle of the crRNA, helping in discrimination between self- and non-self. In Streptococcus thermophilus, this protein is CRISPR system Cms protein Csm4.